The following is a 1024-amino-acid chain: MTMITDSLAVVLQRRDWENPGVTQLNRLAAHPHFASWRNSEEARTDRPSQQLRSLNGEWRFAWFPAPEAVPESWLDCDLPDADTVVVPSNWQMHGYDAPIYTNVTYPITVNPPFVPAENPTGCYSLTFNIDECWLQKGQTRIIFDGVNSAFHLWCNGRWVGYGQDSRLPSEFDLSAFLRAGKNRLAVMVLRWSDGSYLEDQDMWRMSGIFRDVSLLHKPTTQISDFHVATRFNDDFSRAVLEAEVQMCGELRDELRVTVSLWQGETQVASGTTPFGGEIIDERGGYADRVTLRLNVENPALWSAEIPNLYRAVVELHTADGTLIEAEACDVGFREVRIENGLLLLNGKPVLIRGVNRHEHHPLHGQVMDEQTMVQDILLMKQNNFNAVRCSHYPNHPLWYTLCDRYGLYVVDEANIETHGMVPMNRLTDDPRWLPAMSERVTRMVQRDRNHPSVIIWSLGNESGHGANHDALYRWIKSVDPSRPVQYEGGGADTTATDIICPMYARVDEDQPFPAVPKWSIKKWLSLPGELRPLILCEYAHAMGNSLGGFAKYWQAFRQYPRLQGGFVWDWVDQSLIKYDENGNPWSAYGGDFGDTPNDRQFCMNGLVFADRTPHPALTEAKHQQQFFQFRLSGRTIEVTSEYLFRHSDNELLHWSVALDGKPLASGEMPLDVAPQDKQLIELPELPQPESTGQLWLTVHVVQPNATAWSEAGHISAWQQWRLAENLSVALPSAPHAIPQLTTSEMDFCIELGNKRWQFNRQSGFLSQMWIGDEKQLLTPLRDQFIRAPLDNDIGVSEATRIDPNAWVERWKAAGHYQAEVALLQCTADILADAVLITTAHAWQHQGKTLFISRKTYRIDGSGQMAITVDVEVASDTPHPARIGLTCQLAQVAERVNWLGLGPQENYPDRLTAACFDRWDLPLSDMYTPYVFPSENGLRCGTRELNYGPHQWRGDFQFNISRYSQQQLMETSHRHLLHAEEGTWLNIDGFHMGIGGDDSWSPSVSAEFQLSAGRYHYQLVWCQK.

2 residues coordinate substrate: asparagine 103 and aspartate 202. Aspartate 202 provides a ligand contact to Na(+). The Mg(2+) site is built by glutamate 417, histidine 419, and glutamate 462. Substrate is bound by residues glutamate 462 and 538-541; that span reads EYAH. Glutamate 462 functions as the Proton donor in the catalytic mechanism. The active-site Nucleophile is the glutamate 538. Asparagine 598 contributes to the Mg(2+) binding site. Residues phenylalanine 602 and asparagine 605 each contribute to the Na(+) site. 2 residues coordinate substrate: asparagine 605 and tryptophan 1000.

This sequence belongs to the glycosyl hydrolase 2 family. In terms of assembly, homotetramer. It depends on Mg(2+) as a cofactor. The cofactor is Na(+).

It carries out the reaction Hydrolysis of terminal non-reducing beta-D-galactose residues in beta-D-galactosides.. This chain is Beta-galactosidase, found in Escherichia coli (strain SMS-3-5 / SECEC).